We begin with the raw amino-acid sequence, 290 residues long: ATP synthase gamma chain (290 aa).

Belongs to the ATPase gamma chain family. As to quaternary structure, F-type ATPases have 2 components, CF(1) - the catalytic core - and CF(0) - the membrane proton channel. CF(1) has five subunits: alpha(3), beta(3), gamma(1), delta(1), epsilon(1). CF(0) has three main subunits: a, b and c.

The protein localises to the cell inner membrane. In terms of biological role, produces ATP from ADP in the presence of a proton gradient across the membrane. The gamma chain is believed to be important in regulating ATPase activity and the flow of protons through the CF(0) complex. The protein is ATP synthase gamma chain of Anaeromyxobacter dehalogenans (strain 2CP-1 / ATCC BAA-258).